The chain runs to 358 residues: Uroporphyrinogen decarboxylase (358 aa).

Substrate contacts are provided by residues 29 to 33 (RQAGR), Phe-48, Asp-79, Tyr-155, Ser-210, and His-330.

This sequence belongs to the uroporphyrinogen decarboxylase family. In terms of assembly, homodimer.

It localises to the cytoplasm. The catalysed reaction is uroporphyrinogen III + 4 H(+) = coproporphyrinogen III + 4 CO2. The protein operates within porphyrin-containing compound metabolism; protoporphyrin-IX biosynthesis; coproporphyrinogen-III from 5-aminolevulinate: step 4/4. Catalyzes the decarboxylation of four acetate groups of uroporphyrinogen-III to yield coproporphyrinogen-III. The polypeptide is Uroporphyrinogen decarboxylase (Bordetella pertussis (strain Tohama I / ATCC BAA-589 / NCTC 13251)).